Consider the following 170-residue polypeptide: IMPACT family member YDL177C (170 aa).

The disordered stretch occupies residues 79–98; that stretch reads KKKGNKANKSNNSHVNKSRN.

This sequence belongs to the IMPACT family.

This chain is IMPACT family member YDL177C, found in Saccharomyces cerevisiae (strain ATCC 204508 / S288c) (Baker's yeast).